We begin with the raw amino-acid sequence, 263 residues long: Isoprenyl transferase (263 aa).

Residue D38 is part of the active site. D38 serves as a coordination point for Mg(2+). Substrate contacts are provided by residues 39–42 (GNRR), H55, and 83–85 (STD). Residue N86 is the Proton acceptor of the active site. Substrate is bound by residues F87, R89, R212, and 218–220 (RLS). E231 is a Mg(2+) binding site.

The protein belongs to the UPP synthase family. Homodimer. Mg(2+) serves as cofactor.

Functionally, catalyzes the condensation of isopentenyl diphosphate (IPP) with allylic pyrophosphates generating different type of terpenoids. This chain is Isoprenyl transferase, found in Thermus thermophilus (strain ATCC 27634 / DSM 579 / HB8).